The chain runs to 239 residues: ATP-dependent dethiobiotin synthetase BioD (239 aa).

15-20 provides a ligand contact to ATP; the sequence is EIGKTF. Residue T19 coordinates Mg(2+). The active site involves K40. ATP-binding positions include D57, 118-121, 178-179, and 211-213; these read EGVG, NH, and AHL. The Mg(2+) site is built by D57 and E118.

It belongs to the dethiobiotin synthetase family. In terms of assembly, homodimer. Requires Mg(2+) as cofactor.

The protein localises to the cytoplasm. The enzyme catalyses (7R,8S)-7,8-diammoniononanoate + CO2 + ATP = (4R,5S)-dethiobiotin + ADP + phosphate + 3 H(+). It participates in cofactor biosynthesis; biotin biosynthesis; biotin from 7,8-diaminononanoate: step 1/2. Its function is as follows. Catalyzes a mechanistically unusual reaction, the ATP-dependent insertion of CO2 between the N7 and N8 nitrogen atoms of 7,8-diaminopelargonic acid (DAPA, also called 7,8-diammoniononanoate) to form a ureido ring. This is ATP-dependent dethiobiotin synthetase BioD from Burkholderia vietnamiensis (strain G4 / LMG 22486) (Burkholderia cepacia (strain R1808)).